The sequence spans 620 residues: Chaperone protein HscA homolog (620 aa).

The protein belongs to the heat shock protein 70 family.

Functionally, chaperone involved in the maturation of iron-sulfur cluster-containing proteins. Has a low intrinsic ATPase activity which is markedly stimulated by HscB. The protein is Chaperone protein HscA homolog of Shewanella oneidensis (strain ATCC 700550 / JCM 31522 / CIP 106686 / LMG 19005 / NCIMB 14063 / MR-1).